The sequence spans 426 residues: 3-isopropylmalate dehydratase large subunit (426 aa).

3 residues coordinate [4Fe-4S] cluster: Cys307, Cys367, and Cys370.

Belongs to the aconitase/IPM isomerase family. LeuC type 2 subfamily. Heterodimer of LeuC and LeuD. [4Fe-4S] cluster serves as cofactor.

The catalysed reaction is (2R,3S)-3-isopropylmalate = (2S)-2-isopropylmalate. Its pathway is amino-acid biosynthesis; L-leucine biosynthesis; L-leucine from 3-methyl-2-oxobutanoate: step 2/4. In terms of biological role, catalyzes the isomerization between 2-isopropylmalate and 3-isopropylmalate, via the formation of 2-isopropylmaleate. This chain is 3-isopropylmalate dehydratase large subunit, found in Sulfurovum sp. (strain NBC37-1).